Reading from the N-terminus, the 445-residue chain is Trigger factor (445 aa).

Positions 162–247 (GDQVTIDAIG…IKAVHTAEPT (86 aa)) constitute a PPIase FKBP-type domain.

The protein belongs to the FKBP-type PPIase family. Tig subfamily.

It localises to the cytoplasm. The catalysed reaction is [protein]-peptidylproline (omega=180) = [protein]-peptidylproline (omega=0). In terms of biological role, involved in protein export. Acts as a chaperone by maintaining the newly synthesized protein in an open conformation. Functions as a peptidyl-prolyl cis-trans isomerase. The chain is Trigger factor from Rickettsia massiliae (strain Mtu5).